Here is a 272-residue protein sequence, read N- to C-terminus: Glycosylphosphatidylinositol anchor biosynthesis protein 11 (272 aa).

Residues Gln21–Gly31 are compositionally biased toward polar residues. Residues Gln21–Leu48 are disordered. The span at Ser32–Leu48 shows a compositional bias: low complexity. The next 5 membrane-spanning stretches (helical) occupy residues Val91 to Leu111, Leu145 to Phe165, Phe177 to Val197, Thr215 to Leu235, and Ile248 to Trp268.

Belongs to the PIGF family.

It is found in the endoplasmic reticulum membrane. It functions in the pathway glycolipid biosynthesis; glycosylphosphatidylinositol-anchor biosynthesis. Its function is as follows. Acts in the GPI biosynthetic pathway between GlcNAc-PI synthesis and GPI transfer to protein. This Neurospora crassa (strain ATCC 24698 / 74-OR23-1A / CBS 708.71 / DSM 1257 / FGSC 987) protein is Glycosylphosphatidylinositol anchor biosynthesis protein 11 (gpi-11).